A 750-amino-acid chain; its full sequence is Photosystem I P700 chlorophyll a apoprotein A1 (750 aa).

Transmembrane regions (helical) follow at residues 70–93 (VFSA…FHGA), 156–179 (LYCT…FHYH), 195–219 (LNHH…HVSL), 291–309 (IAHH…GHMY), 346–369 (WHAQ…HHMY), 385–411 (LSLF…IFMV), 433–455 (AIIS…LYIH), and 531–549 (FLVH…LILL). Positions 573 and 582 each coordinate [4Fe-4S] cluster. 2 consecutive transmembrane segments (helical) span residues 589–610 (HVFL…HFSW) and 664–686 (LSAY…MFLF). Position 675 (H675) interacts with chlorophyll a'. Chlorophyll a-binding residues include M683 and Y691. Phylloquinone is bound at residue W692. Residues 724–744 (AVGVTHYLLGGIATTWAFFLA) traverse the membrane as a helical segment.

It belongs to the PsaA/PsaB family. In terms of assembly, the PsaA/B heterodimer binds the P700 chlorophyll special pair and subsequent electron acceptors. PSI consists of a core antenna complex that captures photons, and an electron transfer chain that converts photonic excitation into a charge separation. The eukaryotic PSI reaction center is composed of at least 11 subunits. P700 is a chlorophyll a/chlorophyll a' dimer, A0 is one or more chlorophyll a, A1 is one or both phylloquinones and FX is a shared 4Fe-4S iron-sulfur center. is required as a cofactor.

It is found in the plastid. The protein localises to the chloroplast thylakoid membrane. It catalyses the reaction reduced [plastocyanin] + hnu + oxidized [2Fe-2S]-[ferredoxin] = oxidized [plastocyanin] + reduced [2Fe-2S]-[ferredoxin]. PsaA and PsaB bind P700, the primary electron donor of photosystem I (PSI), as well as the electron acceptors A0, A1 and FX. PSI is a plastocyanin-ferredoxin oxidoreductase, converting photonic excitation into a charge separation, which transfers an electron from the donor P700 chlorophyll pair to the spectroscopically characterized acceptors A0, A1, FX, FA and FB in turn. Oxidized P700 is reduced on the lumenal side of the thylakoid membrane by plastocyanin. The chain is Photosystem I P700 chlorophyll a apoprotein A1 from Atropa belladonna (Belladonna).